The sequence spans 619 residues: Very-long-chain aldehyde decarbonylase GL1-4 (619 aa).

The next 5 helical transmembrane spans lie at 45–65 (IAFS…QIWI), 94–114 (GWDD…LAMP), 126–146 (GAVV…YWFH), 178–198 (FAEH…TIYL), and 325–345 (AWYM…AWIY). A Fatty acid hydroxylase domain is found at 138-272 (VEFLYYWFHR…MPFYDYIYNT (135 aa)).

This sequence belongs to the sterol desaturase family. As to quaternary structure, homodimer.

It localises to the endoplasmic reticulum membrane. The enzyme catalyses a long-chain fatty aldehyde + 2 NADPH + O2 + H(+) = a long-chain alkane + formate + 2 NADP(+) + H2O. Functionally, aldehyde decarbonylase involved in the conversion of aldehydes to alkanes. Core component of a very-long-chain alkane synthesis complex. This is Very-long-chain aldehyde decarbonylase GL1-4 from Oryza sativa subsp. indica (Rice).